The chain runs to 99 residues: N(2)-fixation sustaining protein CowN (99 aa).

Belongs to the CowN family.

Its function is as follows. Is required to sustain N(2)-dependent growth in the presence of low levels of carbon monoxide (CO). Probably acts by protecting the N(2) fixation ability of the nitrogenase complex, which is inactivated in the presence of CO. The protein is N(2)-fixation sustaining protein CowN of Magnetococcus marinus (strain ATCC BAA-1437 / JCM 17883 / MC-1).